Consider the following 119-residue polypeptide: MKMVAFVFSHAPHGISLGREGLDAIFSISSIFKKISVFFIGDGVLQLIKNQQPEHILARNYTSSFSILSLYNIKDLYCCKASLLERGLNNNNNFILNIDVLDSYNLRLKLDNYDAIINF.

This sequence belongs to the DsrF/TusC family. Heterohexamer, formed by a dimer of trimers. The hexameric TusBCD complex contains 2 copies each of TusB, TusC and TusD. The TusBCD complex interacts with TusE.

The protein resides in the cytoplasm. Its function is as follows. Part of a sulfur-relay system required for 2-thiolation of 5-methylaminomethyl-2-thiouridine (mnm(5)s(2)U) at tRNA wobble positions. This Buchnera aphidicola subsp. Acyrthosiphon pisum (strain APS) (Acyrthosiphon pisum symbiotic bacterium) protein is Protein TusC.